The chain runs to 435 residues: Enolase (435 aa).

Residue Gln163 coordinates (2R)-2-phosphoglycerate. The active-site Proton donor is the Glu205. Residues Asp243, Glu292, and Asp319 each coordinate Mg(2+). Positions 344, 373, 374, and 395 each coordinate (2R)-2-phosphoglycerate. The active-site Proton acceptor is Lys344.

The protein belongs to the enolase family. It depends on Mg(2+) as a cofactor.

It is found in the cytoplasm. Its subcellular location is the secreted. The protein resides in the cell surface. It catalyses the reaction (2R)-2-phosphoglycerate = phosphoenolpyruvate + H2O. It participates in carbohydrate degradation; glycolysis; pyruvate from D-glyceraldehyde 3-phosphate: step 4/5. Functionally, catalyzes the reversible conversion of 2-phosphoglycerate (2-PG) into phosphoenolpyruvate (PEP). It is essential for the degradation of carbohydrates via glycolysis. This chain is Enolase, found in Streptococcus equi subsp. zooepidemicus (strain MGCS10565).